The primary structure comprises 458 residues: GTPase Der (458 aa).

EngA-type G domains follow at residues 4 to 169 (PSIA…PKDL) and 178 to 353 (IMMS…TQHR). GTP is bound by residues 10–17 (GRPNVGKS), 57–61 (DTGGL), 120–123 (NKCE), 184–191 (GRPNVGKS), 231–235 (DTAGI), and 296–299 (NKWD). Positions 354 to 439 (RRVTTSVVNE…PIILLWRGKQ (86 aa)) constitute a KH-like domain.

Belongs to the TRAFAC class TrmE-Era-EngA-EngB-Septin-like GTPase superfamily. EngA (Der) GTPase family. As to quaternary structure, associates with the 50S ribosomal subunit.

Functionally, GTPase that plays an essential role in the late steps of ribosome biogenesis. In Prochlorococcus marinus subsp. pastoris (strain CCMP1986 / NIES-2087 / MED4), this protein is GTPase Der.